Here is a 216-residue protein sequence, read N- to C-terminus: Probable ubiquitin-conjugating enzyme E2 ECU01_1010 (216 aa).

A compositionally biased stretch (basic residues) spans 1 to 10 (MFKPSAHRRL). Residues 1–29 (MFKPSAHRRLPREDDIIQEDDEDGPLWPS) form a disordered region. Residues 29–196 (SALRRLSNEE…VIRIAREEDE (168 aa)) form the UBC core domain. Cysteine 120 functions as the Glycyl thioester intermediate in the catalytic mechanism.

It belongs to the ubiquitin-conjugating enzyme family.

It catalyses the reaction S-ubiquitinyl-[E1 ubiquitin-activating enzyme]-L-cysteine + [E2 ubiquitin-conjugating enzyme]-L-cysteine = [E1 ubiquitin-activating enzyme]-L-cysteine + S-ubiquitinyl-[E2 ubiquitin-conjugating enzyme]-L-cysteine.. It functions in the pathway protein modification; protein ubiquitination. Functionally, catalyzes the covalent attachment of ubiquitin to other proteins so as to signal them for selective protein degradation. Involved in the formation of multiubiquitin chains. The chain is Probable ubiquitin-conjugating enzyme E2 ECU01_1010 from Encephalitozoon cuniculi (strain GB-M1) (Microsporidian parasite).